Here is a 198-residue protein sequence, read N- to C-terminus: HTH-type transcriptional repressor DhaR (198 aa).

The region spanning 4 to 64 (TPVRQHLVEK…QVLQEFFSDL (61 aa)) is the HTH tetR-type domain.

Its function is as follows. Transcriptional repressor for the dhaA haloalkane dehalogenase gene. This is HTH-type transcriptional repressor DhaR (dhaR) from Mycobacterium sp. (strain GP1).